The primary structure comprises 536 residues: Membrane protein insertase YidC (536 aa).

4 consecutive transmembrane segments (helical) span residues 5-25 (LIIA…IFPT), 353-373 (GNYG…FFPL), 418-438 (VNPL…FGLY), and 495-515 (MLML…GLVI).

The protein belongs to the OXA1/ALB3/YidC family. Type 1 subfamily. In terms of assembly, interacts with the Sec translocase complex via SecD. Specifically interacts with transmembrane segments of nascent integral membrane proteins during membrane integration.

Its subcellular location is the cell inner membrane. Required for the insertion and/or proper folding and/or complex formation of integral membrane proteins into the membrane. Involved in integration of membrane proteins that insert both dependently and independently of the Sec translocase complex, as well as at least some lipoproteins. Aids folding of multispanning membrane proteins. This chain is Membrane protein insertase YidC, found in Geobacter sp. (strain M21).